Here is a 592-residue protein sequence, read N- to C-terminus: K(+) efflux antiporter 4 (592 aa).

The N-terminal stretch at 1–35 (MRRCKNNTDKFSVITMRLLTLLLICTFFFFFSFAY) is a signal peptide. 12 consecutive transmembrane segments (helical) span residues 169–189 (LISD…AFAC), 193–213 (PVIT…LSFV), 221–241 (TVAQ…FSAA), 248–268 (AVAI…SGIT), 279–299 (GIFV…KFLM), 313–333 (VGTL…LPVL), 343–363 (VLSM…LFVL), 388–408 (LAAV…GLSL), 437–457 (NFFA…HFLW), 462–482 (ILLA…AIVV), 491–511 (TAVL…VLLS), and 535–555 (LVTT…GVLL).

Belongs to the monovalent cation:proton antiporter 2 (CPA2) transporter (TC 2.A.37) family. KEA (TC 2.A.37.1) subfamily. Expressed in roots, stems, leaves, flowers and silique.

The protein localises to the golgi apparatus membrane. Its subcellular location is the golgi apparatus. The protein resides in the trans-Golgi network membrane. It localises to the prevacuolar compartment membrane. It is found in the endomembrane system. The enzyme catalyses K(+)(in) + H(+)(out) = K(+)(out) + H(+)(in). Electroneutral K(+)/H(+) efflux antiporter involved in K(+) homeostasis and osmotic adjustment. Together with KEA5 and KEA6, promotes growth and development, and facilitates endosomal pH and ions homeostasis, as well as salt tolerance (e.g. K(+), NaCl and LiCl), probably by supporting cell wall biosynthesis during rapid etiolated seedling growth. In Arabidopsis thaliana (Mouse-ear cress), this protein is K(+) efflux antiporter 4.